Here is a 435-residue protein sequence, read N- to C-terminus: ATP-dependent protease ATPase subunit HslU (435 aa).

ATP is bound by residues valine 18, 60–65, aspartate 248, glutamate 313, and arginine 385; that span reads GVGKTE.

This sequence belongs to the ClpX chaperone family. HslU subfamily. A double ring-shaped homohexamer of HslV is capped on each side by a ring-shaped HslU homohexamer. The assembly of the HslU/HslV complex is dependent on binding of ATP.

It localises to the cytoplasm. Functionally, ATPase subunit of a proteasome-like degradation complex; this subunit has chaperone activity. The binding of ATP and its subsequent hydrolysis by HslU are essential for unfolding of protein substrates subsequently hydrolyzed by HslV. HslU recognizes the N-terminal part of its protein substrates and unfolds these before they are guided to HslV for hydrolysis. The chain is ATP-dependent protease ATPase subunit HslU from Rhodospirillum rubrum (strain ATCC 11170 / ATH 1.1.1 / DSM 467 / LMG 4362 / NCIMB 8255 / S1).